A 1264-amino-acid chain; its full sequence is Phosphatidylinositol 3,4,5-trisphosphate 5-phosphatase 2 (1264 aa).

Residues 26–122 (WYHRDLSRAA…GLVCALLLPV (97 aa)) form the SH2 domain. Over residues 124–137 (REREPDPPDDRDVS) the composition is skewed to basic and acidic residues. Residues 124 to 182 (REREPDPPDDRDVSDGEDEKPPLPPRSGSTSISAPVGPGSPPAAPETPTTPAAESAPNG) form a disordered region. At serine 137 the chain carries Phosphoserine. The span at 169-180 (ETPTTPAAESAP) shows a compositional bias: low complexity. The residue at position 170 (threonine 170) is a Phosphothreonine. Phosphoserine occurs at positions 246 and 358. Tyrosine 892 is modified (phosphotyrosine). At serine 896 the chain carries Phosphoserine. A disordered region spans residues 903-1123 (GAKSKAPSVS…TFLGEVASGD (221 aa)). The segment covering 944–954 (PPPTGRPPAPP) has biased composition (pro residues). Residues 950 to 955 (PPAPPR) carry the SH3-binding motif. The span at 957–971 (ASREEPLTPRLKAEG) shows a compositional bias: basic and acidic residues. Threonine 964 carries the phosphothreonine modification. The NPXY motif motif lies at 989–992 (NPAY). At tyrosine 992 the chain carries Phosphotyrosine. 3 stretches are compositionally biased toward pro residues: residues 1002 to 1017 (LLPPEPPSPARAPVPP), 1054 to 1065 (LPPPDFPPPPLP), and 1093 to 1110 (GPPPPKAHPRPPLPPGPS). Serine 1137 carries the phosphoserine modification. The segment at 1140–1178 (DYAPAGPGRSVLLPGPLELQPPRGLPSDYGRPLSFPPPR) is disordered. Residues tyrosine 1141 and tyrosine 1168 each carry the phosphotyrosine modification. One can recognise an SAM domain in the interval 1210 to 1264 (WLRAIGLERYEEGLVHNGWDDLEFLSDITEEDLEEAGVQDPAHKRLLLDTLQLSK). Serine 1263 is subject to Phosphoserine.

The protein belongs to the inositol 1,4,5-trisphosphate 5-phosphatase family. Interacts with tyrosine phosphorylated form of SHC1. Interacts with EGFR. Upon stimulation by the EGF signaling pathway, it forms a complex with SHC1 and EGFR. Interacts with cytoskeletal protein SORBS3/vinexin, promoting its localization to the periphery of cells. Forms a complex with filamin (FLNA or FLNB), actin, GPIb (GP1BA or GP1BB) that regulates cortical and submembraneous actin. Interacts with c-Met/MET, when c-Met/MET is phosphorylated on 'Tyr-1356'. Interacts with p130Cas/BCAR1. Interacts with CENTD3/ARAP3 via its SAM domain. Interacts with c-Cbl/CBL and CAP/SORBS1. Interacts with activated EPHA2 receptor. Interacts with receptor FCGR2A. Interacts with receptor FCGR2B. Interacts with tyrosine kinase ABL1. Interacts with tyrosine kinase TEC. Interacts with CSF1R. Interacts (via N-terminus) with SH3YL1 (via SH3 domain). Interacts with FCRL6 (tyrosine phosphorylated form). Interacts (via SH2 domain) with tyrosine phosphorylated KLRC1 (via ITIM). Interacts with NEDD9/HEF1. In terms of processing, tyrosine phosphorylated by the members of the SRC family after exposure to a diverse array of extracellular stimuli such as insulin, growth factors such as EGF or PDGF, chemokines, integrin ligands and hypertonic and oxidative stress. May be phosphorylated upon IgG receptor FCGR2B-binding. Phosphorylated at Tyr-992 following cell attachment and spreading. Phosphorylated at Tyr-1168 following EGF signaling pathway stimulation. Phosphorylated at Thr-964 in response to PDGF.

Its subcellular location is the cytoplasm. It is found in the cytosol. It localises to the membrane. The protein resides in the cell projection. The protein localises to the filopodium. Its subcellular location is the lamellipodium. It is found in the basal cell membrane. It localises to the nucleus. The protein resides in the nucleus speckle. The protein localises to the cytoskeleton. Its subcellular location is the spindle pole. It carries out the reaction a 1,2-diacyl-sn-glycero-3-phospho-(1D-myo-inositol-3,4,5-trisphosphate) + H2O = a 1,2-diacyl-sn-glycero-3-phospho-(1D-myo-inositol-3,4-bisphosphate) + phosphate. It catalyses the reaction 1,2-dioctanoyl-sn-glycero-3-phospho-(1D-myo-inositol-3,4,5-trisphosphate) + H2O = 1,2-dioctanoyl-sn-glycero-3-phospho-(1D-myo-inositol-3,4-bisphosphate) + phosphate. The catalysed reaction is 1,2-dihexadecanoyl-sn-glycero-3-phospho-(1D-myo-inositol-3,4,5-trisphosphate) + H2O = 1,2-dihexadecanoyl-sn-glycero-3-phospho-(1D-myo-inositol-3,4-bisphosphate) + phosphate. Its activity is regulated as follows. Activated upon translocation to the sites of synthesis of PtdIns(3,4,5)P3 in the membrane. Enzymatic activity is enhanced in the presence of phosphatidylserine. Its function is as follows. Phosphatidylinositol (PtdIns) phosphatase that specifically hydrolyzes the 5-phosphate of phosphatidylinositol-3,4,5-trisphosphate (PtdIns(3,4,5)P3) to produce PtdIns(3,4)P2, thereby negatively regulating the PI3K (phosphoinositide 3-kinase) pathways. Required for correct mitotic spindle orientation and therefore progression of mitosis. Plays a central role in regulation of PI3K-dependent insulin signaling, although the precise molecular mechanisms and signaling pathways remain unclear. While overexpression reduces both insulin-stimulated MAP kinase and Akt activation, its absence does not affect insulin signaling or GLUT4 trafficking. Confers resistance to dietary obesity. May act by regulating AKT2, but not AKT1, phosphorylation at the plasma membrane. Part of a signaling pathway that regulates actin cytoskeleton remodeling. Required for the maintenance and dynamic remodeling of actin structures as well as in endocytosis, having a major impact on ligand-induced EGFR internalization and degradation. Participates in regulation of cortical and submembraneous actin by hydrolyzing PtdIns(3,4,5)P3 thereby regulating membrane ruffling. Regulates cell adhesion and cell spreading. Required for HGF-mediated lamellipodium formation, cell scattering and spreading. Acts as a negative regulator of EPHA2 receptor endocytosis by inhibiting via PI3K-dependent Rac1 activation. Acts as a regulator of neuritogenesis by regulating PtdIns(3,4,5)P3 level and is required to form an initial protrusive pattern, and later, maintain proper neurite outgrowth. Acts as a negative regulator of the FC-gamma-RIIA receptor (FCGR2A). Mediates signaling from the FC-gamma-RIIB receptor (FCGR2B), playing a central role in terminating signal transduction from activating immune/hematopoietic cell receptor systems. Involved in EGF signaling pathway. Upon stimulation by EGF, it is recruited by EGFR and dephosphorylates PtdIns(3,4,5)P3. Plays a negative role in regulating the PI3K-PKB pathway, possibly by inhibiting PKB activity. Down-regulates Fc-gamma-R-mediated phagocytosis in macrophages independently of INPP5D/SHIP1. In macrophages, down-regulates NF-kappa-B-dependent gene transcription by regulating macrophage colony-stimulating factor (M-CSF)-induced signaling. Plays a role in the localization of AURKA and NEDD9/HEF1 to the basolateral membrane at interphase in polarized cysts, thereby mediates cell cycle homeostasis, cell polarization and cilia assembly. Additionally promotion of cilia growth is also facilitated by hydrolysis of (PtdIns(3,4,5)P3) to PtdIns(3,4)P2. Promotes formation of apical membrane-initiation sites during the initial stages of lumen formation via Rho family-induced actin filament organization and CTNNB1 localization to cell-cell contacts. May also hydrolyze PtdIns(1,3,4,5)P4, and could thus affect the levels of the higher inositol polyphosphates like InsP6. Involved in endochondral ossification. The chain is Phosphatidylinositol 3,4,5-trisphosphate 5-phosphatase 2 from Canis lupus familiaris (Dog).